A 348-amino-acid chain; its full sequence is Holliday junction branch migration complex subunit RuvB (348 aa).

Residues 1–20 are disordered; the sequence is MKPPARMVSPERRSDDVGDT. The segment at 1–183 is large ATPase domain (RuvB-L); it reads MKPPARMVSP…FGIPIRLNFY (183 aa). Residues L22, R23, G64, K67, T68, T69, 130-132, R173, Y183, and R220 contribute to the ATP site; that span reads EDF. Residue T68 coordinates Mg(2+). A small ATPAse domain (RuvB-S) region spans residues 184 to 254; the sequence is TVEELEGIVT…IADHALSALE (71 aa). The segment at 257 to 348 is head domain (RuvB-H); sequence AAGLDAMDRR…FGLFGSEDDA (92 aa). DNA-binding residues include R293, R312, and R317.

Belongs to the RuvB family. In terms of assembly, homohexamer. Forms an RuvA(8)-RuvB(12)-Holliday junction (HJ) complex. HJ DNA is sandwiched between 2 RuvA tetramers; dsDNA enters through RuvA and exits via RuvB. An RuvB hexamer assembles on each DNA strand where it exits the tetramer. Each RuvB hexamer is contacted by two RuvA subunits (via domain III) on 2 adjacent RuvB subunits; this complex drives branch migration. In the full resolvosome a probable DNA-RuvA(4)-RuvB(12)-RuvC(2) complex forms which resolves the HJ.

Its subcellular location is the cytoplasm. The catalysed reaction is ATP + H2O = ADP + phosphate + H(+). Functionally, the RuvA-RuvB-RuvC complex processes Holliday junction (HJ) DNA during genetic recombination and DNA repair, while the RuvA-RuvB complex plays an important role in the rescue of blocked DNA replication forks via replication fork reversal (RFR). RuvA specifically binds to HJ cruciform DNA, conferring on it an open structure. The RuvB hexamer acts as an ATP-dependent pump, pulling dsDNA into and through the RuvAB complex. RuvB forms 2 homohexamers on either side of HJ DNA bound by 1 or 2 RuvA tetramers; 4 subunits per hexamer contact DNA at a time. Coordinated motions by a converter formed by DNA-disengaged RuvB subunits stimulates ATP hydrolysis and nucleotide exchange. Immobilization of the converter enables RuvB to convert the ATP-contained energy into a lever motion, pulling 2 nucleotides of DNA out of the RuvA tetramer per ATP hydrolyzed, thus driving DNA branch migration. The RuvB motors rotate together with the DNA substrate, which together with the progressing nucleotide cycle form the mechanistic basis for DNA recombination by continuous HJ branch migration. Branch migration allows RuvC to scan DNA until it finds its consensus sequence, where it cleaves and resolves cruciform DNA. The sequence is that of Holliday junction branch migration complex subunit RuvB from Bradyrhizobium sp. (strain BTAi1 / ATCC BAA-1182).